The chain runs to 307 residues: Shikimate kinase 2, chloroplastic (307 aa).

Residues 1–60 (MEARAGLAMQSRAAVGVGAGPGVGRRGRAVIRVGKRPTAASLRVGGPAGPAAAKPLAPLY) constitute a chloroplast transit peptide. 101 to 108 (GMMGSGKS) serves as a coordination point for ATP. Mg(2+) is bound at residue Ser108. Residues Asp126, Arg151, and Gly173 each coordinate substrate. Residue Arg212 coordinates ATP. The disordered stretch occupies residues 285-307 (HSTSSGPVGDLIVDSQNRRTKAL).

The protein belongs to the shikimate kinase family. Mg(2+) serves as cofactor. Expressed in panicles.

It is found in the plastid. Its subcellular location is the chloroplast. The enzyme catalyses shikimate + ATP = 3-phosphoshikimate + ADP + H(+). It participates in metabolic intermediate biosynthesis; chorismate biosynthesis; chorismate from D-erythrose 4-phosphate and phosphoenolpyruvate: step 5/7. Functionally, catalyzes the specific phosphorylation of the 3-hydroxyl group of shikimic acid using ATP as a cosubstrate. The polypeptide is Shikimate kinase 2, chloroplastic (SK2) (Oryza sativa subsp. japonica (Rice)).